Here is a 127-residue protein sequence, read N- to C-terminus: Fluoride-specific ion channel FluC (127 aa).

Helical transmembrane passes span 4–24 (WFWI…LSTW) and 36–56 (GTLA…EIAA). Glycine 75 and threonine 78 together coordinate Na(+). The chain crosses the membrane as a helical span at residues 100–120 (LANIAITLVVCLLAGVLGMVV).

The protein belongs to the fluoride channel Fluc/FEX (TC 1.A.43) family.

Its subcellular location is the cell inner membrane. The enzyme catalyses fluoride(in) = fluoride(out). Na(+) is not transported, but it plays an essential structural role and its presence is essential for fluoride channel function. Its function is as follows. Fluoride-specific ion channel. Important for reducing fluoride concentration in the cell, thus reducing its toxicity. The sequence is that of Fluoride-specific ion channel FluC from Sorangium cellulosum (strain So ce56) (Polyangium cellulosum (strain So ce56)).